Reading from the N-terminus, the 464-residue chain is Heterogeneous nuclear ribonucleoprotein K (464 aa).

Position 1 is an N-acetylmethionine (M1). The interval 1 to 37 (METEQPEETFPNTETNGEFGKRPAEDMEEEQAFKRSR) is disordered. A necessary for interaction with DDX1 region spans residues 1-276 (METEQPEETF…GRGGRPMPPS (276 aa)). Residues 19–37 (FGKRPAEDMEEEQAFKRSR) are compositionally biased toward basic and acidic residues. K34 carries the post-translational modification N6-acetyllysine; alternate. Residue K34 forms a Glycyl lysine isopeptide (Lys-Gly) (interchain with G-Cter in SUMO1); alternate linkage. Residue K34 forms a Glycyl lysine isopeptide (Lys-Gly) (interchain with G-Cter in SUMO2); alternate linkage. At S36 the chain carries Phosphoserine. T39 is subject to Phosphothreonine. Residues 42–104 (MVELRILLQS…ETIGEILKKI (63 aa)) enclose the KH 1 domain. Residues K52 and K60 each participate in a glycyl lysine isopeptide (Lys-Gly) (interchain with G-Cter in SUMO2) cross-link. A run of 2 repeats spans residues 54–76 (AGAVIGKGGKNIKALRTDYNASV) and 59–62 (GKGG). Residues 54–421 (AGAVIGKGGK…QIRHESGASI (368 aa)) form a 2 X 22 AA approximate repeats region. The tract at residues 59–407 (GKGGKNIKAL…LAGSIIGKGG (349 aa)) is 5 X 4 AA repeats of G-X-G-G. Phosphoserine occurs at positions 75 and 116. One can recognise a KH 2 domain in the interval 144-209 (DCELRLLIHQ…DRVVECIKII (66 aa)). K163 is covalently cross-linked (Glycyl lysine isopeptide (Lys-Gly) (interchain with G-Cter in SUMO1); alternate). K163 is covalently cross-linked (Glycyl lysine isopeptide (Lys-Gly) (interchain with G-Cter in SUMO2); alternate). An N6-acetyllysine modification is found at K198. Residues S214 and S216 each carry the phosphoserine modification. Residue K219 forms a Glycyl lysine isopeptide (Lys-Gly) (interchain with G-Cter in SUMO2); alternate linkage. K219 carries the post-translational modification N6-succinyllysine; alternate. Residues 236-273 (YGGFTMMFDDRRGRPVGFPMRGRGGFDRMPPGRGGRPM) are RNA-binding RGG-box. 3 tandem repeats follow at residues 245 to 250 (DRRGRP), 257 to 260 (GRGG), and 267 to 270 (GRGG). A 2 X 6 AA approximate repeats region spans residues 245–329 (DRRGRPVGFP…LMAYDRRGRP (85 aa)). The segment at 250-329 (PVGFPMRGRG…LMAYDRRGRP (80 aa)) is disordered. Low complexity predominate over residues 252–266 (GFPMRGRGGFDRMPP). Residues 276–285 (SRRDYDDMSP) are compositionally biased toward basic and acidic residues. The residue at position 284 (S284) is a Phosphoserine. A 3-4 repeat occupies 295–298 (GRGG). R316 carries the omega-N-methylarginine modification. One copy of the 2-2 repeat lies at 324–329 (DRRGRP). At R377 the chain carries Omega-N-methylarginine. S379 bears the Phosphoserine mark. Position 380 is a phosphotyrosine (Y380). One can recognise a KH 3 domain in the interval 387–451 (IITTQVTIPK…DQIQNAQYLL (65 aa)). 2 repeat units span residues 399–421 (AGSIIGKGGQRIKQIRHESGASI) and 404–407 (GKGG). K405 carries the N6-acetyllysine; alternate modification. A Glycyl lysine isopeptide (Lys-Gly) (interchain with G-Cter in SUMO2); alternate cross-link involves residue K405. S420 carries the post-translational modification Phosphoserine. A Glycyl lysine isopeptide (Lys-Gly) (interchain with G-Cter in SUMO1); alternate cross-link involves residue K422. A Glycyl lysine isopeptide (Lys-Gly) (interchain with G-Cter in SUMO2); alternate cross-link involves residue K422. K422 is covalently cross-linked (Glycyl lysine isopeptide (Lys-Gly) (interchain with G-Cter in SUMO); alternate).

As to quaternary structure, identified in the spliceosome C complex. Interacts with ANKRD28, RBM42 and ZIK1. Interacts with DDX1. Interacts with MDM2; this interaction leads to ubiquitination and proteasomal degradation. Interacts with p53/TP53. Interacts with BRDT. Interacts with IVNS1ABP. Interacts with PPIA/CYPA. Part of a transcription inhibitory ribonucleoprotein complex composed at least of the circular RNA circZNF827, ZNF827 and HNRNPL. In terms of processing, sumoylated by CBX4. Sumoylation is increased upon DNA damage, such as that produced by doxorubicin, etoposide, UV light and camptothecin, due to enhanced CBX4 phosphorylation by HIPK2 under these conditions. Post-translationally, ubiquitinated by MDM2. Doxorubicin treatment does not affect monoubiquitination, but slightly decreases HNRNPK poly-ubiquitination. O-glycosylated (O-GlcNAcylated), in a cell cycle-dependent manner.

The protein localises to the cytoplasm. It localises to the nucleus. It is found in the nucleoplasm. The protein resides in the cell projection. Its subcellular location is the podosome. One of the major pre-mRNA-binding proteins. Binds tenaciously to poly(C) sequences. Likely to play a role in the nuclear metabolism of hnRNAs, particularly for pre-mRNAs that contain cytidine-rich sequences. Can also bind poly(C) single-stranded DNA. Plays an important role in p53/TP53 response to DNA damage, acting at the level of both transcription activation and repression. When sumoylated, acts as a transcriptional coactivator of p53/TP53, playing a role in p21/CDKN1A and 14-3-3 sigma/SFN induction. As far as transcription repression is concerned, acts by interacting with long intergenic RNA p21 (lincRNA-p21), a non-coding RNA induced by p53/TP53. This interaction is necessary for the induction of apoptosis, but not cell cycle arrest. As part of a ribonucleoprotein complex composed at least of ZNF827, HNRNPL and the circular RNA circZNF827 that nucleates the complex on chromatin, may negatively regulate the transcription of genes involved in neuronal differentiation. This is Heterogeneous nuclear ribonucleoprotein K (HNRNPK) from Macaca fascicularis (Crab-eating macaque).